The sequence spans 272 residues: NADPH-dependent aldehyde reductase 2, chloroplastic (272 aa).

A chloroplast-targeting transit peptide spans 1 to 53; the sequence is MAAASSVSSPPLCLAGRVAIVTGSSRGIGRAIAIHLAELGARVVVNYSTSPVE. 26 to 50 lines the NADP(+) pocket; the sequence is RGIGRAIAIHLAELGARVVVNYSTS. Residue Ser165 coordinates substrate. The active-site Proton acceptor is the Tyr179.

This sequence belongs to the short-chain dehydrogenases/reductases (SDR) family.

It localises to the plastid. The protein resides in the chloroplast. Functionally, aldehyde reductase that catalyzes the reduction of the aldehyde carbonyl groups on saturated and alpha,beta-unsaturated aldehydes with more than 5 carbons. No activity on alpha,beta-unsaturated ketones. Can use propionaldehyde, butyraldehyde, methylglyoxal, (e)-2-pentenal, (E)-2-hexenal, (Z)-3-hexenal and (E)-2-nonenal as substrates, but not propenal (acrolein), crotonaldehyde, 2-butanone, 3-buten-2-one or 1-penten-3-one. This Arabidopsis thaliana (Mouse-ear cress) protein is NADPH-dependent aldehyde reductase 2, chloroplastic.